Consider the following 331-residue polypeptide: Fructose-1,6-bisphosphatase class 1 (331 aa).

4 residues coordinate Mg(2+): Glu-80, Asp-98, Leu-100, and Asp-101. Substrate-binding positions include 101–104 (DGSS) and Asn-189. Glu-261 lines the Mg(2+) pocket.

The protein belongs to the FBPase class 1 family. Homotetramer. The cofactor is Mg(2+).

Its subcellular location is the cytoplasm. It catalyses the reaction beta-D-fructose 1,6-bisphosphate + H2O = beta-D-fructose 6-phosphate + phosphate. It participates in carbohydrate biosynthesis; gluconeogenesis. The polypeptide is Fructose-1,6-bisphosphatase class 1 (Rhodobacter capsulatus (strain ATCC BAA-309 / NBRC 16581 / SB1003)).